The chain runs to 314 residues: Annexin-like protein RJ4 (314 aa).

Annexin repeat units lie at residues 10-81, 82-153, 165-236, and 240-311; these read FCAK…RWTL, DPAD…ALVT, KLAN…TAIR, and DPKK…TLLG. Ca(2+) is bound by residues Gly-25, Gly-27, and Glu-67. Residues Ile-253, Arg-255, Gly-257, Asp-297, and Thr-298 each coordinate Ca(2+).

The protein belongs to the annexin (TC 1.A.31.1) family. As to expression, predominantly in developing fruit.

The protein is Annexin-like protein RJ4 of Fragaria ananassa (Strawberry).